The primary structure comprises 260 residues: Thiazole synthase (260 aa).

Lys96 (schiff-base intermediate with DXP) is an active-site residue. 1-deoxy-D-xylulose 5-phosphate is bound by residues Gly157, 184–185 (AG), and 206–207 (NT).

Belongs to the ThiG family. In terms of assembly, homotetramer. Forms heterodimers with either ThiH or ThiS.

Its subcellular location is the cytoplasm. It carries out the reaction [ThiS sulfur-carrier protein]-C-terminal-Gly-aminoethanethioate + 2-iminoacetate + 1-deoxy-D-xylulose 5-phosphate = [ThiS sulfur-carrier protein]-C-terminal Gly-Gly + 2-[(2R,5Z)-2-carboxy-4-methylthiazol-5(2H)-ylidene]ethyl phosphate + 2 H2O + H(+). Its pathway is cofactor biosynthesis; thiamine diphosphate biosynthesis. Its function is as follows. Catalyzes the rearrangement of 1-deoxy-D-xylulose 5-phosphate (DXP) to produce the thiazole phosphate moiety of thiamine. Sulfur is provided by the thiocarboxylate moiety of the carrier protein ThiS. In vitro, sulfur can be provided by H(2)S. The sequence is that of Thiazole synthase from Rhodopseudomonas palustris (strain BisA53).